A 372-amino-acid polypeptide reads, in one-letter code: Actin-related protein T3 (372 aa).

The protein belongs to the actin family. Interacts with PFN3. In terms of tissue distribution, ubiquitously expressed.

It is found in the cytoplasm. It localises to the cytoskeleton. The protein localises to the nucleus. The polypeptide is Actin-related protein T3 (ACTRT3) (Homo sapiens (Human)).